The chain runs to 152 residues: Protein IpgF (152 aa).

A signal peptide spans 1–17 (MSRFVFILLCFIPHLGR).

It belongs to the IagB/IpgF/P19 family.

In Shigella flexneri, this protein is Protein IpgF (ipgF).